Consider the following 256-residue polypeptide: uncharacterized protein (256 aa).

3 helical membrane-spanning segments follow: residues 42–62 (LIALTVLSNLIIISFVLIWFF), 73–93 (FFTLFIPFFISLLVAIFLIFL), and 108–128 (WLFLWTCVFSSLPIFNLWLIV).

It localises to the cell membrane. This is an uncharacterized protein from Mycoplasma genitalium (strain ATCC 33530 / DSM 19775 / NCTC 10195 / G37) (Mycoplasmoides genitalium).